We begin with the raw amino-acid sequence, 51 residues long: Large ribosomal subunit protein bL33 (51 aa).

The disordered stretch occupies residues 1–20; it reads MRDKIRLNSSAGTGHFYTTD.

This sequence belongs to the bacterial ribosomal protein bL33 family.

The protein is Large ribosomal subunit protein bL33 of Psychromonas ingrahamii (strain DSM 17664 / CCUG 51855 / 37).